A 502-amino-acid chain; its full sequence is Cobyric acid synthase (502 aa).

The region spanning 260 to 433 (VLRVAVCAVP…WHGSLESDGF (174 aa)) is the GATase cobBQ-type domain. The Nucleophile role is filled by Cys341. The active site involves His425.

This sequence belongs to the CobB/CobQ family. CobQ subfamily.

Its pathway is cofactor biosynthesis; adenosylcobalamin biosynthesis. Its function is as follows. Catalyzes amidations at positions B, D, E, and G on adenosylcobyrinic A,C-diamide. NH(2) groups are provided by glutamine, and one molecule of ATP is hydrogenolyzed for each amidation. The protein is Cobyric acid synthase of Streptomyces coelicolor (strain ATCC BAA-471 / A3(2) / M145).